The following is a 323-amino-acid chain: Penicillopepsin-1 (323 aa).

O-linked (Man...) serine glycosylation is present at S3. T7 carries O-linked (Man...) threonine glycosylation. The Peptidase A1 domain occupies 17–320 (YITPVTIGGT…DSDGPQLGFA (304 aa)). Residues D33 and D213 contribute to the active site. Residues C249 and C283 are joined by a disulfide bond.

Belongs to the peptidase A1 family. As to quaternary structure, monomer.

It is found in the secreted. It catalyses the reaction Hydrolysis of proteins with broad specificity similar to that of pepsin A, preferring hydrophobic residues at P1 and P1', but also cleaving 20-Gly-|-Glu-21 in the B chain of insulin. Clots milk, and activates trypsinogen.. Its function is as follows. Secreted aspartic endopeptidase that allows assimilation of proteinaceous substrates. The scissile peptide bond is attacked by a nucleophilic water molecule activated by two aspartic residues in the active site. Shows a broad primary substrate specificity. Favors hydrophobic residues at the P1 and P1' positions, but can also activate trypsinogen and hydrolyze the B chain of insulin between positions 'Gly-20' and 'Glu-21'. In Penicillium janthinellum (Penicillium vitale), this protein is Penicillopepsin-1.